Here is a 346-residue protein sequence, read N- to C-terminus: Melatonin receptor type 1C (346 aa).

Over 1–26 (MERPGSNGSCSGCRLEGGPAARAASG) the chain is Extracellular. N-linked (GlcNAc...) asparagine glycosylation is present at Asn7. A helical membrane pass occupies residues 27–47 (LAAVLIVTIVVDVLGNALVIL). Residues 48–60 (SVLRNKKLRNAGN) lie on the Cytoplasmic side of the membrane. Residues 61 to 81 (IFVVSLSVADLVVAVYPYPLI) traverse the membrane as a helical segment. Residues 82-99 (LSAIFHNGWTMGNIHCQI) are Extracellular-facing. Cys97 and Cys174 form a disulfide bridge. A helical membrane pass occupies residues 100 to 120 (SGFLMGLSVIGSIFNITAIAI). Over 121 to 139 (NRYCYICHSLRYDKLFNLK) the chain is Cytoplasmic. Residues 140–160 (NTCCYICLTWTLTVVAIVPNF) traverse the membrane as a helical segment. Topologically, residues 161–184 (FVGSLQYDPRIYSCTFAQTVSTSY) are extracellular. The chain crosses the membrane as a helical span at residues 185–205 (TITVVVVHFIVPLSIVTFCYL). The Cytoplasmic segment spans residues 206–237 (RIWILVIQVKHRVRQDCKQKIRAADIRNFLTM). A helical transmembrane segment spans residues 238-258 (FVVFVLFAVCWGPLNFIGLAV). At 259-271 (SINPSKVQPHIPE) the chain is on the extracellular side. Residues 272–292 (WLFVLSYFMAYFNSCLNAVIY) form a helical membrane-spanning segment. Over 293 to 346 (GLLNQNFRKEYKRILLMLRTPRLLFIDVSKGGTEGLKSKPSPAVTNNNQAEIHL) the chain is Cytoplasmic. Residues 326 to 346 (EGLKSKPSPAVTNNNQAEIHL) form a disordered region. The span at 335–346 (AVTNNNQAEIHL) shows a compositional bias: polar residues.

It belongs to the G-protein coupled receptor 1 family. Expressed in optic tectum, neostriatum, hypothalamus, thalamus and pineal gland, less in cerebellum and retina.

It is found in the cell membrane. Its function is as follows. High affinity receptor for melatonin. The activity of this receptor is mediated by pertussis toxin sensitive G proteins that inhibits adenylate cyclase activity. The polypeptide is Melatonin receptor type 1C (Gallus gallus (Chicken)).